A 938-amino-acid polypeptide reads, in one-letter code: Glutamate receptor ionotropic, NMDA 1 (938 aa).

A signal peptide spans 1–18; that stretch reads MSTMHLLTFALLFSCSFA. The Extracellular portion of the chain corresponds to 19 to 559; sequence RAACDPKIVN…TLDSFMQPFQ (541 aa). Residues asparagine 61, asparagine 203, asparagine 239, asparagine 276, asparagine 300, asparagine 350, asparagine 368, asparagine 440, asparagine 471, and asparagine 491 are each glycosylated (N-linked (GlcNAc...) asparagine). Cysteine 79 and cysteine 308 are oxidised to a cystine. Disulfide bonds link cysteine 420–cysteine 454 and cysteine 436–cysteine 455. Glycine-binding residues include proline 516, threonine 518, and arginine 523. Residues 560-580 traverse the membrane as a helical segment; the sequence is STLWLLVGLSVHVVAVMLYLL. Over 581-602 the chain is Cytoplasmic; the sequence is DRFSPFGRFKVNSEEEEEDALT. An intramembrane region (discontinuously helical) is located at residues 603–624; that stretch reads LSSAMWFSWGVLLNSGIGEGAP. The interval 603–624 is pore-forming; it reads LSSAMWFSWGVLLNSGIGEGAP. Residues 625-630 lie on the Cytoplasmic side of the membrane; sequence RSFSAR. Residues 631–647 traverse the membrane as a helical segment; the sequence is ILGMVWAGFAMIIVASY. At 648–812 the chain is on the extracellular side; the sequence is TANLAAFLVL…NAPATLTFEN (165 aa). An N-linked (GlcNAc...) asparagine glycan is attached at asparagine 674. Residues serine 688 and aspartate 732 each contribute to the glycine site. Cysteine 744 and cysteine 798 are oxidised to a cystine. An N-linked (GlcNAc...) asparagine glycan is attached at asparagine 771. The chain crosses the membrane as a helical span at residues 813–833; the sequence is MAGVFMLVAGGIVAGIFLIFI. Topologically, residues 834–938 are cytoplasmic; sequence EIAYKRHKDA…LQLCSRHRES (105 aa). At lysine 877 the chain carries Phosphoserine. Phosphoserine; by PKC is present on residues serine 889, serine 890, serine 896, and serine 897. The interval 889–938 is disordered; sequence SSFKRRRSSKDTSTGGGRGALQNQKDTVLPRRAIEREEGQLQLCSRHRES. Lysine 898 is modified (phosphoserine). Over residues 916–927 the composition is skewed to basic and acidic residues; sequence VLPRRAIEREEG.

The protein belongs to the glutamate-gated ion channel (TC 1.A.10.1) family. NR1/GRIN1 subfamily. As to quaternary structure, heterotetramer; the NMDAR subunits are modular and harbor tiered domains that function in concert to regulate opening and closing of the cation-selective ion channel pore. Forms heterotetrameric channels composed of two GluN1/zeta subunits (GRIN1), and two identical GluN2/epsilon subunits (GRIN2A, GRIN2B, GRIN2C or GRIN2D) or GluN3 subunits (GRIN3A or GRIN3B) (in vitro). Can also form heterotetrameric channels that contain at least two GluN1 subunits and at least two different GluN2 subunits (or a combination of one GluN2 and one GluN3 subunits) (in vitro). In vivo, the subunit composition may vary in function of the expression levels of the different subunits. Found in a complex with GRIN2A or GRIN2B, GRIN3A and PPP2CB. Found in a complex with GRIN2A or GRIN2B and GRIN3B;. Interacts with SNX27 (via PDZ domain); the interaction is required for recycling to the plasma membrane when endocytosed and prevent degradation in lysosomes. Interacts with DLG4 and MPDZ. Interacts with LRFN1 and LRFN2. Interacts with MYZAP. Found in a complex with DLG4 and PRR7. Found in a complex with GRIN2B and PRR7. Interacts with PRR7; the interaction is reduced following NMDA receptor activity. Post-translationally, NMDA is probably regulated by C-terminal phosphorylation of an isoform of NR1 by PKC. Dephosphorylated on Ser-897 probably by protein phosphatase 2A (PPP2CB). Its phosphorylated state is influenced by the formation of the NMDAR-PPP2CB complex and the NMDAR channel activity. In terms of tissue distribution, detected throughout the brain, in brain cortex, cerebellum, thalamus and olfactory bulb.

It localises to the cell membrane. The protein localises to the postsynaptic cell membrane. It is found in the synaptic cell membrane. The protein resides in the postsynaptic density membrane. The enzyme catalyses Ca(2+)(in) = Ca(2+)(out). It carries out the reaction Na(+)(in) = Na(+)(out). It catalyses the reaction K(+)(in) = K(+)(out). With respect to regulation, NMDA glutamate receptor activity is potentiated by Zn2(+) in a dose-dependent fashion. The potentiating effect of Zn2(+) is at submicromolar concentrations and its inhibitory action is at high micromolar to millimolar concentrations. Excitatory glycine receptors are inhibited by D-serine at 100uM. Functionally, component of N-methyl-D-aspartate (NMDA) receptors (NMDARs) that function as heterotetrameric, ligand-gated cation channels with high calcium permeability and voltage-dependent block by Mg(2+). NMDARs participate in synaptic plasticity for learning and memory formation by contributing to the long-term potentiation (LTP). Channel activation requires binding of the neurotransmitter L-glutamate to the GluN2 subunit, glycine or D-serine binding to the GluN1 subunit, plus membrane depolarization to eliminate channel inhibition by Mg(2+). NMDARs mediate simultaneously the potasium efflux and the influx of calcium and sodium. Each GluN2 or GluN3 subunit confers differential attributes to channel properties, including activation, deactivation and desensitization kinetics, pH sensitivity, Ca2(+) permeability, and binding to allosteric modulators. Forms excitatory glycinergic receptor complexes with GluN3 alone which are activated by glycine binding to the GluN1 and GluN3 subunits. This chain is Glutamate receptor ionotropic, NMDA 1, found in Rattus norvegicus (Rat).